Reading from the N-terminus, the 60-residue chain is Large ribosomal subunit protein bL33 (60 aa).

This sequence belongs to the bacterial ribosomal protein bL33 family.

In Chlorobaculum tepidum (strain ATCC 49652 / DSM 12025 / NBRC 103806 / TLS) (Chlorobium tepidum), this protein is Large ribosomal subunit protein bL33.